Consider the following 557-residue polypeptide: Potassium-transporting ATPase potassium-binding subunit (557 aa).

Transmembrane regions (helical) follow at residues 6–26 (IQLLIFLFALLIFSPLFGLGL), 59–79 (ALSLLVFNFFGFLLLFLILFF), 127–147 (AGLTTQNFLSATTGLCVLLAL), 172–192 (LYVLLPLSFIFALFLVGFGVV), 247–267 (ISNFLQMFSILILPGACVFLY), 278–298 (WAIFSVMFTILCVGILIVWTF), 363–383 (IVFGGVGAGMYGMILFVLLTV), 410–430 (ILGILLPSTIILLFTAISVSV), 475–495 (VMIAIAMILGRFGVILPVLVI), and 520–540 (FYILLLSVIIIVGALTFFPVL).

It belongs to the KdpA family. As to quaternary structure, the system is composed of three essential subunits: KdpA, KdpB and KdpC.

Its subcellular location is the cell inner membrane. In terms of biological role, part of the high-affinity ATP-driven potassium transport (or Kdp) system, which catalyzes the hydrolysis of ATP coupled with the electrogenic transport of potassium into the cytoplasm. This subunit binds the periplasmic potassium ions and delivers the ions to the membrane domain of KdpB through an intramembrane tunnel. The polypeptide is Potassium-transporting ATPase potassium-binding subunit (Leptospira interrogans serogroup Icterohaemorrhagiae serovar copenhageni (strain Fiocruz L1-130)).